The chain runs to 149 residues: UPF0178 protein Sama_3557 (149 aa).

It belongs to the UPF0178 family.

The polypeptide is UPF0178 protein Sama_3557 (Shewanella amazonensis (strain ATCC BAA-1098 / SB2B)).